Reading from the N-terminus, the 463-residue chain is Arginine biosynthesis bifunctional protein ArgJ, chloroplastic (463 aa).

Threonine 207, lysine 233, threonine 244, glutamate 331, asparagine 458, and threonine 463 together coordinate substrate. Threonine 244 (nucleophile) is an active-site residue.

The protein belongs to the ArgJ family. As to quaternary structure, heterodimer of an alpha and a beta chain.

The protein resides in the plastid. Its subcellular location is the chloroplast. It carries out the reaction N(2)-acetyl-L-ornithine + L-glutamate = N-acetyl-L-glutamate + L-ornithine. The enzyme catalyses L-glutamate + acetyl-CoA = N-acetyl-L-glutamate + CoA + H(+). It functions in the pathway amino-acid biosynthesis; L-arginine biosynthesis; L-ornithine and N-acetyl-L-glutamate from L-glutamate and N(2)-acetyl-L-ornithine (cyclic): step 1/1. Its pathway is amino-acid biosynthesis; L-arginine biosynthesis; N(2)-acetyl-L-ornithine from L-glutamate: step 1/4. In terms of biological role, catalyzes two activities which are involved in the cyclic version of arginine biosynthesis: the synthesis of acetylglutamate from glutamate and acetyl-CoA, and of ornithine by transacetylation between acetylornithine and glutamate. The chain is Arginine biosynthesis bifunctional protein ArgJ, chloroplastic from Oryza sativa subsp. japonica (Rice).